The following is a 754-amino-acid chain: LON peptidase N-terminal domain and RING finger protein 2 (754 aa).

2 TPR repeats span residues 23–58 and 59–91; these read IAQRLEEGDEAFRAGDYEMAAELFRSMLAGLAQPDR and GLCLRLGDALARAGRLPEALGAFRGAARLGALR. The segment at 112–136 is disordered; it reads PLSAENPGGEPEAPGEGGPAPEPRA. Residues 115–125 show a composition bias toward low complexity; sequence AENPGGEPEAP. TPR repeat units follow at residues 197–230, 231–264, and 266–298; these read LRRLAGQARSLQRQQQPEAALLRCDQALELAPDD, NSLLLLRAELYLTMKNYEQALQDASAACQNEPLL, and KGHQVKAQALSGLGRSKEVLKEFLYCLALNPEC. The tract at residues 398-439 is disordered; that stretch reads GLKRQFPDDVEDAPDLNAPGKIPKKDLSLQRSPNSETEESQG. Over residues 426 to 439 the composition is skewed to polar residues; the sequence is LQRSPNSETEESQG. A TPR 6 repeat occupies 447-483; the sequence is FECALCMRLLFEPVTTPCGHTFCLKCLERCLDHAPHC. Residues 449-487 form an RING-type zinc finger; the sequence is CALCMRLLFEPVTTPCGHTFCLKCLERCLDHAPHCPLCK. The region spanning 528-737 is the Lon N-terminal domain; it reads MSELSNLTRD…AIRRILVIIT (210 aa).

The sequence is that of LON peptidase N-terminal domain and RING finger protein 2 (LONRF2) from Homo sapiens (Human).